The primary structure comprises 674 residues: uncharacterized protein (674 aa).

Positions 1 to 24 (MKTLKALKIFIIVYISSVSLESFA) are cleaved as a signal peptide. The next 2 membrane-spanning stretches (helical) occupy residues 226–246 (IIGAALILYTMFFAFNMALNK) and 254–274 (ITLFIIKFLFVVYFSIGLEPL). Residues 363-384 (GNGPGGNNKPIPNFDPDSKKDR) form a disordered region. A run of 4 helical transmembrane segments spans residues 409–429 (IIILVAGIAFSVIFLSILLYF), 436–456 (CMITIYVMTYISPIFIPMVLF), 469–489 (VCISCALQPAVVAGFIALLIT), and 562–582 (VVSILAELLCVLVFSVIFYYF). Residues 624-674 (SSVHAQGKSPVEDKPDIGSKRKDGVQQGEDSENSSGGELADLASGSGGGKL) are disordered. Over residues 633-647 (PVEDKPDIGSKRKDG) the composition is skewed to basic and acidic residues.

The protein belongs to the TrbL/VirB6 family.

It localises to the cell membrane. This is an uncharacterized protein from Rickettsia typhi (strain ATCC VR-144 / Wilmington).